We begin with the raw amino-acid sequence, 330 residues long: Putative quinone oxidoreductase YhfP (330 aa).

NADP(+) contacts are provided by residues Tyr-45, 160-163, 182-184, Arg-202, Leu-248, Ile-262, Ser-273, and Asn-320; these read TGGV and TGN.

The protein belongs to the zinc-containing alcohol dehydrogenase family. Quinone oxidoreductase subfamily. As to quaternary structure, homodimer, or homotetramer.

It localises to the cytoplasm. This chain is Putative quinone oxidoreductase YhfP (yhfP), found in Bacillus subtilis (strain 168).